A 223-amino-acid chain; its full sequence is ATP-dependent dethiobiotin synthetase BioD (223 aa).

Threonine 16 is a Mg(2+) binding site. Lysine 37 is an active-site residue. Serine 41 serves as a coordination point for substrate. Residues aspartate 50 and glutamate 111 each coordinate Mg(2+). ATP contacts are provided by residues aspartate 50, 111 to 114, and 171 to 172; these read EGAG and NR.

This sequence belongs to the dethiobiotin synthetase family. As to quaternary structure, homodimer. Mg(2+) is required as a cofactor.

The protein localises to the cytoplasm. It catalyses the reaction (7R,8S)-7,8-diammoniononanoate + CO2 + ATP = (4R,5S)-dethiobiotin + ADP + phosphate + 3 H(+). The protein operates within cofactor biosynthesis; biotin biosynthesis; biotin from 7,8-diaminononanoate: step 1/2. Catalyzes a mechanistically unusual reaction, the ATP-dependent insertion of CO2 between the N7 and N8 nitrogen atoms of 7,8-diaminopelargonic acid (DAPA, also called 7,8-diammoniononanoate) to form a ureido ring. This is ATP-dependent dethiobiotin synthetase BioD from Anaeromyxobacter dehalogenans (strain 2CP-1 / ATCC BAA-258).